The following is a 156-amino-acid chain: MNITVLAVGTKMPRWVDEAVAEYAKRFGRDAAYALKEIKPEKRGAGVNAVQGMAAEEKRILEAIPQGAFLVVLDERGKAPTSVELAEHLKSWRQNGEHVCFVIGGADGMTDRLKQQARMMMRLSSLTLPHGMVRVLLTEQLYRAVSILHNHPYHRE.

S-adenosyl-L-methionine contacts are provided by residues L73, G104, and 123–128; that span reads LSSLTL.

This sequence belongs to the RNA methyltransferase RlmH family. In terms of assembly, homodimer.

Its subcellular location is the cytoplasm. It carries out the reaction pseudouridine(1915) in 23S rRNA + S-adenosyl-L-methionine = N(3)-methylpseudouridine(1915) in 23S rRNA + S-adenosyl-L-homocysteine + H(+). Functionally, specifically methylates the pseudouridine at position 1915 (m3Psi1915) in 23S rRNA. This is Ribosomal RNA large subunit methyltransferase H from Neisseria gonorrhoeae (strain NCCP11945).